Reading from the N-terminus, the 55-residue chain is Ferredoxin (55 aa).

4Fe-4S ferredoxin-type domains follow at residues 2–27 (HIIT…HEGT) and 28–55 (GKYE…VKAE). Positions 8, 11, 14, 18, 37, 40, 43, and 47 each coordinate [4Fe-4S] cluster.

The cofactor is [4Fe-4S] cluster.

Its function is as follows. Ferredoxins are iron-sulfur proteins that transfer electrons in a wide variety of metabolic reactions. This Thermoanaerobacterium thermosaccharolyticum (Clostridium thermosaccharolyticum) protein is Ferredoxin.